Here is a 445-residue protein sequence, read N- to C-terminus: Rab GDP dissociation inhibitor beta (445 aa).

M1 is subject to N-acetylmethionine. K57 is subject to N6-succinyllysine. K112 bears the N6-acetyllysine mark. Phosphoserine is present on S130. K269 is modified (N6-acetyllysine). S382 is subject to Phosphoserine.

The protein belongs to the Rab GDI family. As to quaternary structure, interacts with RHOH. Interacts with the GDP-bound inactive forms of RAB3A, RAB3B, RAB3C, RAB5A, RAB5B, RAB5C, RAB8A, RAB8B, RAB10, RAB12, RAB35, and RAB43; binds RAB3D to a lesser extent. Interacts with DZIP1; this interaction negatively regulates the interaction of GDI2 with GDP-bound RAB8A. As to expression, ubiquitously expressed.

Its subcellular location is the cytoplasm. It is found in the membrane. The protein localises to the golgi apparatus. The protein resides in the trans-Golgi network. Its function is as follows. GDP-dissociation inhibitor preventing the GDP to GTP exchange of most Rab proteins. By keeping these small GTPases in their inactive GDP-bound form regulates intracellular membrane trafficking. Negatively regulates protein transport to the cilium and ciliogenesis through the inhibition of RAB8A. The polypeptide is Rab GDP dissociation inhibitor beta (Gdi2) (Rattus norvegicus (Rat)).